We begin with the raw amino-acid sequence, 237 residues long: ATP synthase subunit a (237 aa).

The next 5 helical transmembrane spans lie at 17–37, 75–95, 112–132, 179–201, and 214–234; these read LSDMLMITITSLIVFIIAVAA, FLTLGVTLIMYVFVANMLGLP, DATVTLTLAVMVVGLTHYYGV, ILLGLLASLGTHYGVLGAVGAAI, and GTIQAFIFTMLTMVYMAHKVS.

It belongs to the ATPase A chain family. As to quaternary structure, F-type ATPases have 2 components, CF(1) - the catalytic core - and CF(0) - the membrane proton channel. CF(1) has five subunits: alpha(3), beta(3), gamma(1), delta(1), epsilon(1). CF(0) has three main subunits: a(1), b(2) and c(9-12). The alpha and beta chains form an alternating ring which encloses part of the gamma chain. CF(1) is attached to CF(0) by a central stalk formed by the gamma and epsilon chains, while a peripheral stalk is formed by the delta and b chains.

The protein resides in the cell membrane. Its function is as follows. Key component of the proton channel; it plays a direct role in the translocation of protons across the membrane. The sequence is that of ATP synthase subunit a from Geobacillus kaustophilus (strain HTA426).